Here is a 72-residue protein sequence, read N- to C-terminus: Protein P13 (72 aa).

The protein resides in the virion membrane. This chain is Protein P13 (P13), found in Pseudomonas phage phi6 (Bacteriophage phi-6).